We begin with the raw amino-acid sequence, 111 residues long: Probable 4-amino-4-deoxy-L-arabinose-phosphoundecaprenol flippase subunit ArnE (111 aa).

The next 3 helical transmembrane spans lie at 38 to 58, 61 to 81, and 89 to 109; these read LWLGLALICMGAAMVLWLLVL, LPVGIAYPMLSLNFVWVTLAA, and VLPRHWLGVALIISGIIILGS. An EamA domain is found at 40-109; that stretch reads LGLALICMGA…IISGIIILGS (70 aa).

This sequence belongs to the ArnE family. As to quaternary structure, heterodimer of ArnE and ArnF.

The protein localises to the cell inner membrane. The protein operates within bacterial outer membrane biogenesis; lipopolysaccharide biosynthesis. Translocates 4-amino-4-deoxy-L-arabinose-phosphoundecaprenol (alpha-L-Ara4N-phosphoundecaprenol) from the cytoplasmic to the periplasmic side of the inner membrane. This chain is Probable 4-amino-4-deoxy-L-arabinose-phosphoundecaprenol flippase subunit ArnE, found in Salmonella paratyphi A (strain ATCC 9150 / SARB42).